The sequence spans 100 residues: MIPLQHGLLLAAILFVLGLTGLVIRRNLLFMLISLEIMINASALAFVVAGSYWGQSDGQVMYILAITLAAAEASIGLALLLQLYRRRQTLNIDTVSEMRG.

A run of 3 helical transmembrane segments spans residues 4-24 (LQHG…GLVI), 28-48 (LLFM…AFVV), and 60-80 (VMYI…LALL).

The protein belongs to the complex I subunit 4L family. As to quaternary structure, NDH-1 is composed of 13 different subunits. Subunits NuoA, H, J, K, L, M, N constitute the membrane sector of the complex.

It is found in the cell inner membrane. The enzyme catalyses a quinone + NADH + 5 H(+)(in) = a quinol + NAD(+) + 4 H(+)(out). Its function is as follows. NDH-1 shuttles electrons from NADH, via FMN and iron-sulfur (Fe-S) centers, to quinones in the respiratory chain. The immediate electron acceptor for the enzyme in this species is believed to be ubiquinone. Couples the redox reaction to proton translocation (for every two electrons transferred, four hydrogen ions are translocated across the cytoplasmic membrane), and thus conserves the redox energy in a proton gradient. The sequence is that of NADH-quinone oxidoreductase subunit K from Musicola paradisiaca (strain Ech703) (Dickeya paradisiaca).